Consider the following 609-residue polypeptide: Proteasome-associated ATPase (609 aa).

The interval 1–24 (MGESERSEAFGIPRDSPLSSGDAA) is disordered. The stretch at 20 to 96 (SGDAAELEQL…LREEVDRLGQ (77 aa)) forms a coiled coil. 296 to 301 (GCGKTL) is an ATP binding site. The tract at residues 608 to 609 (YL) is docks into pockets in the proteasome alpha-ring.

It belongs to the AAA ATPase family. As to quaternary structure, homohexamer. Assembles into a hexameric ring structure that caps the 20S proteasome core. Strongly interacts with the prokaryotic ubiquitin-like protein Pup through a hydrophobic interface; the interacting region of ARC lies in its N-terminal coiled-coil domain. There is one Pup binding site per ARC hexamer ring. Upon ATP-binding, the C-terminus of ARC interacts with the alpha-rings of the proteasome core, possibly by binding to the intersubunit pockets.

It participates in protein degradation; proteasomal Pup-dependent pathway. ATPase which is responsible for recognizing, binding, unfolding and translocation of pupylated proteins into the bacterial 20S proteasome core particle. May be essential for opening the gate of the 20S proteasome via an interaction with its C-terminus, thereby allowing substrate entry and access to the site of proteolysis. Thus, the C-termini of the proteasomal ATPase may function like a 'key in a lock' to induce gate opening and therefore regulate proteolysis. The sequence is that of Proteasome-associated ATPase from Mycobacterium bovis (strain BCG / Pasteur 1173P2).